The primary structure comprises 300 residues: UDP-N-acetylenolpyruvoylglucosamine reductase (300 aa).

Residues 22–190 form the FAD-binding PCMH-type domain; sequence RVGGAAEWLA…LSARFRLQPG (169 aa). Arg169 is a catalytic residue. Residue Ser220 is the Proton donor of the active site. Residue Glu290 is part of the active site.

Belongs to the MurB family. FAD serves as cofactor.

Its subcellular location is the cytoplasm. It carries out the reaction UDP-N-acetyl-alpha-D-muramate + NADP(+) = UDP-N-acetyl-3-O-(1-carboxyvinyl)-alpha-D-glucosamine + NADPH + H(+). Its pathway is cell wall biogenesis; peptidoglycan biosynthesis. Functionally, cell wall formation. The polypeptide is UDP-N-acetylenolpyruvoylglucosamine reductase (Synechococcus sp. (strain CC9605)).